The chain runs to 872 residues: DNA mismatch repair protein MutS (872 aa).

632 to 639 (GPNMGGKS) provides a ligand contact to ATP.

The protein belongs to the DNA mismatch repair MutS family.

In terms of biological role, this protein is involved in the repair of mismatches in DNA. It is possible that it carries out the mismatch recognition step. This protein has a weak ATPase activity. The polypeptide is DNA mismatch repair protein MutS (Colwellia psychrerythraea (strain 34H / ATCC BAA-681) (Vibrio psychroerythus)).